A 322-amino-acid chain; its full sequence is Quinolinate synthase (322 aa).

Histidine 38 and serine 55 together coordinate iminosuccinate. Cysteine 100 contributes to the [4Fe-4S] cluster binding site. Iminosuccinate-binding positions include 126-128 (YIN) and serine 143. Cysteine 186 lines the [4Fe-4S] cluster pocket. Iminosuccinate contacts are provided by residues 212 to 214 (HPE) and threonine 229. Cysteine 279 contacts [4Fe-4S] cluster.

The protein belongs to the quinolinate synthase family. Type 2 subfamily. [4Fe-4S] cluster serves as cofactor.

The protein localises to the cytoplasm. The enzyme catalyses iminosuccinate + dihydroxyacetone phosphate = quinolinate + phosphate + 2 H2O + H(+). It functions in the pathway cofactor biosynthesis; NAD(+) biosynthesis; quinolinate from iminoaspartate: step 1/1. Its function is as follows. Catalyzes the condensation of iminoaspartate with dihydroxyacetone phosphate to form quinolinate. The sequence is that of Quinolinate synthase from Cyanothece sp. (strain PCC 7425 / ATCC 29141).